Reading from the N-terminus, the 442-residue chain is Limonoid 1-O-acetyltransferse (442 aa).

Residues H155 and D381 each act as proton acceptor in the active site.

It belongs to the plant acyltransferase family. As to quaternary structure, monomer.

It catalyses the reaction (1S)-1-hydroxy-luvungin A + acetyl-CoA = (1S)-1-acetoxy-luvungin A + CoA. It participates in secondary metabolite biosynthesis; terpenoid biosynthesis. Its function is as follows. Acetyltransferase involved in the biosynthesis of limonoids triterpene natural products such as limonin, a compound with insecticidal activity responsible for the bitter taste in citrus. Catalyzes the formation of (1S)-1-acetoxy-luvungin A from (1S)-1-hydroxy-luvungin A. The sequence is that of Limonoid 1-O-acetyltransferse from Citrus sinensis (Sweet orange).